Consider the following 272-residue polypeptide: HMP-PP phosphatase (272 aa).

Catalysis depends on aspartate 8, which acts as the Nucleophile. 3 residues coordinate Mg(2+): aspartate 8, aspartate 10, and aspartate 212.

This sequence belongs to the HAD-like hydrolase superfamily. Cof family. It depends on Mg(2+) as a cofactor.

The catalysed reaction is 4-amino-2-methyl-5-(diphosphooxymethyl)pyrimidine + H2O = 4-amino-2-methyl-5-(phosphooxymethyl)pyrimidine + phosphate + H(+). Catalyzes the hydrolysis of 4-amino-2-methyl-5-hydroxymethylpyrimidine pyrophosphate (HMP-PP) to 4-amino-2-methyl-5-hydroxymethylpyrimidine phosphate (HMP-P). This is HMP-PP phosphatase from Enterobacter sp. (strain 638).